The sequence spans 235 residues: Derlin-3 (235 aa).

The Cytoplasmic segment spans residues 1 to 22 (MAWQGLAAEFLQVPAVTRAYTA). A helical membrane pass occupies residues 23–43 (ACVLTTAAVQLELLSPFQLYF). Topologically, residues 44–58 (NPHLVFRKFQVWRLV) are lumenal. The helical transmembrane segment at 59–79 (TNFLFFGPLGFSFFFNMLFVF) threads the bilayer. Residues 80–98 (RYCRMLEEGSFRGRTADFV) are Cytoplasmic-facing. A helical membrane pass occupies residues 99 to 119 (FMFLFGGVLMTLLGLLGSLFF). Residues 120–157 (LGQALMAMLVYVWSRRSPRVRVNFFGLLTFQAPFLPWA) lie on the Lumenal side of the membrane. The helical transmembrane segment at 158-178 (LMGFSLLLGNSILVDLLGIAV) threads the bilayer. Topologically, residues 179–235 (GHIYYFLEDVFPNQPGGKRLLQTPGFLKLLLDAPAEDPNYLPLPEEQPGPHLPPPQQ) are cytoplasmic. The tract at residues 216-235 (PNYLPLPEEQPGPHLPPPQQ) is disordered. Residues 223–235 (EEQPGPHLPPPQQ) show a composition bias toward pro residues.

It belongs to the derlin family. As to quaternary structure, forms homo- and heterooligomers with DERL2 and, to a lesser extent, with DERL1. Interacts with VCP and EDEM1. Interacts with SELENOK and SELENOS. Interacts with the signal recognition particle/SRP and the SRP receptor; in the process of endoplasmic reticulum stress-induced pre-emptive quality control. As to expression, unlike DERL1 and DERL2, restricted to several tissues. Expressed at high levels in placenta, pancreas, spleen and small intestine.

The protein localises to the endoplasmic reticulum membrane. Its function is as follows. Functional component of endoplasmic reticulum-associated degradation (ERAD) for misfolded lumenal glycoproteins, but not that of misfolded nonglycoproteins. May act by forming a channel that allows the retrotranslocation of misfolded glycoproteins into the cytosol where they are ubiquitinated and degraded by the proteasome. May mediate the interaction between VCP and the misfolded glycoproteins. May be involved in endoplasmic reticulum stress-induced pre-emptive quality control, a mechanism that selectively attenuates the translocation of newly synthesized proteins into the endoplasmic reticulum and reroutes them to the cytosol for proteasomal degradation. The polypeptide is Derlin-3 (Homo sapiens (Human)).